A 216-amino-acid polypeptide reads, in one-letter code: GTP cyclohydrolase 1 (216 aa).

Zn(2+) contacts are provided by C109, H112, and C180.

The protein belongs to the GTP cyclohydrolase I family. In terms of assembly, homomer.

It catalyses the reaction GTP + H2O = 7,8-dihydroneopterin 3'-triphosphate + formate + H(+). It functions in the pathway cofactor biosynthesis; 7,8-dihydroneopterin triphosphate biosynthesis; 7,8-dihydroneopterin triphosphate from GTP: step 1/1. This chain is GTP cyclohydrolase 1, found in Tolumonas auensis (strain DSM 9187 / NBRC 110442 / TA 4).